Reading from the N-terminus, the 159-residue chain is Ribosomal RNA large subunit methyltransferase H (159 aa).

S-adenosyl-L-methionine-binding positions include L76, G108, and 127-132; that span reads FSKMTF.

It belongs to the RNA methyltransferase RlmH family. As to quaternary structure, homodimer.

It localises to the cytoplasm. The enzyme catalyses pseudouridine(1915) in 23S rRNA + S-adenosyl-L-methionine = N(3)-methylpseudouridine(1915) in 23S rRNA + S-adenosyl-L-homocysteine + H(+). Specifically methylates the pseudouridine at position 1915 (m3Psi1915) in 23S rRNA. The protein is Ribosomal RNA large subunit methyltransferase H of Staphylococcus haemolyticus (strain JCSC1435).